The sequence spans 205 residues: Golgi to ER traffic protein 1 (205 aa).

Topologically, residues 1–9 are lumenal; the sequence is MFELQPSSI. A helical transmembrane segment spans residues 10-29; it reads VVLVFCVLAIKVCISLIGKT. Residues 30–116 are Cytoplasmic-facing; it reads TIQDRIWYLY…QISKLVNLAI (87 aa). Positions 53–103 form a coiled coil; it reads ALAQKREELVRVNKERRAISAQDEYAKWTKLNRQFDKLNSEVNDLAEATSS. The helical transmembrane segment at 117 to 137 threads the bilayer; the sequence is AATTTAPIWFSRIWYRKVVLF. Residues 138-161 lie on the Lumenal side of the membrane; it reads YLPPKVFPYYIEWVLALPFIVTGG. Residues 162-178 traverse the membrane as a helical segment; sequence VGLTVWMFALNSVLSSL. The Cytoplasmic portion of the chain corresponds to 179–205; the sequence is EFLIKFYLEEPVKKPEAPAASEAQTKQ.

Belongs to the WRB/GET1 family. Component of the Golgi to ER traffic (GET) complex, which is composed of GET1, GET2 and GET3. Within the complex, GET1 and GET2 form a heterotetramer which is stabilized by phosphatidylinositol binding and which binds to the GET3 homodimer.

Its subcellular location is the endoplasmic reticulum membrane. The protein localises to the golgi apparatus membrane. In terms of biological role, required for the post-translational delivery of tail-anchored (TA) proteins to the endoplasmic reticulum. Together with GET2, acts as a membrane receptor for soluble GET3, which recognizes and selectively binds the transmembrane domain of TA proteins in the cytosol. The GET complex cooperates with the HDEL receptor ERD2 to mediate the ATP-dependent retrieval of resident ER proteins that contain a C-terminal H-D-E-L retention signal from the Golgi to the ER. This Clavispora lusitaniae (strain ATCC 42720) (Yeast) protein is Golgi to ER traffic protein 1.